The following is a 253-amino-acid chain: 5'/3'-nucleotidase SurE (253 aa).

Positions 8, 9, 39, and 92 each coordinate a divalent metal cation.

The protein belongs to the SurE nucleotidase family. The cofactor is a divalent metal cation.

It is found in the cytoplasm. It carries out the reaction a ribonucleoside 5'-phosphate + H2O = a ribonucleoside + phosphate. The enzyme catalyses a ribonucleoside 3'-phosphate + H2O = a ribonucleoside + phosphate. The catalysed reaction is [phosphate](n) + H2O = [phosphate](n-1) + phosphate + H(+). In terms of biological role, nucleotidase with a broad substrate specificity as it can dephosphorylate various ribo- and deoxyribonucleoside 5'-monophosphates and ribonucleoside 3'-monophosphates with highest affinity to 3'-AMP. Also hydrolyzes polyphosphate (exopolyphosphatase activity) with the preference for short-chain-length substrates (P20-25). Might be involved in the regulation of dNTP and NTP pools, and in the turnover of 3'-mononucleotides produced by numerous intracellular RNases (T1, T2, and F) during the degradation of various RNAs. This Salmonella paratyphi A (strain AKU_12601) protein is 5'/3'-nucleotidase SurE.